The primary structure comprises 874 residues: Leucine--tRNA ligase (874 aa).

The short motif at 47–57 (PYPSGKLHMGH) is the 'HIGH' region element. A 'KMSKS' region motif is present at residues 636 to 640 (KMSKS). Lys-639 contacts ATP.

It belongs to the class-I aminoacyl-tRNA synthetase family.

It is found in the cytoplasm. The catalysed reaction is tRNA(Leu) + L-leucine + ATP = L-leucyl-tRNA(Leu) + AMP + diphosphate. In Acinetobacter baumannii (strain AB0057), this protein is Leucine--tRNA ligase.